The following is a 473-amino-acid chain: Photosystem II CP43 reaction center protein (473 aa).

Positions 1–14 (MKTLYSLRRFYHVE) are excised as a propeptide. Thr-15 is modified (N-acetylthreonine). Thr-15 is subject to Phosphothreonine. 5 consecutive transmembrane segments (helical) span residues 69 to 93 (LFEVAHFVPEKPMYEQGLILLPHLA), 134 to 155 (LIGPETLEESFPFFGYVWKDKN), 178 to 200 (KAVWFGGVYDTWAPGGGDVRKIT), 255 to 275 (KPFAWARRAFIWSGEAYLSYS), and 291 to 312 (WFNNTAYPSEFYGPTGPEASQA). Glu-367 contacts [CaMn4O5] cluster. Residues 447–471 (RARAAAAGFEKGIDRETEPVFFMNP) form a helical membrane-spanning segment.

Belongs to the PsbB/PsbC family. PsbC subfamily. PSII is composed of 1 copy each of membrane proteins PsbA, PsbB, PsbC, PsbD, PsbE, PsbF, PsbH, PsbI, PsbJ, PsbK, PsbL, PsbM, PsbT, PsbX, PsbY, PsbZ, Psb30/Ycf12, at least 3 peripheral proteins of the oxygen-evolving complex and a large number of cofactors. It forms dimeric complexes. The cofactor is Binds multiple chlorophylls and provides some of the ligands for the Ca-4Mn-5O cluster of the oxygen-evolving complex. It may also provide a ligand for a Cl- that is required for oxygen evolution. PSII binds additional chlorophylls, carotenoids and specific lipids..

The protein localises to the plastid. It localises to the chloroplast thylakoid membrane. In terms of biological role, one of the components of the core complex of photosystem II (PSII). It binds chlorophyll and helps catalyze the primary light-induced photochemical processes of PSII. PSII is a light-driven water:plastoquinone oxidoreductase, using light energy to abstract electrons from H(2)O, generating O(2) and a proton gradient subsequently used for ATP formation. This chain is Photosystem II CP43 reaction center protein, found in Staurastrum punctulatum (Green alga).